A 274-amino-acid polypeptide reads, in one-letter code: Undecaprenyl-diphosphatase (274 aa).

Helical transmembrane passes span 21 to 39 (FLPI…LLGF), 44 to 64 (AQVF…LVYW), 85 to 105 (FNLA…GKAI), 109 to 129 (LFTP…ILWA), 185 to 205 (ATDF…VYSL), 214 to 234 (VADL…AWLC), and 247 to 267 (FVPF…TAST).

This sequence belongs to the UppP family.

The protein localises to the cell inner membrane. It catalyses the reaction di-trans,octa-cis-undecaprenyl diphosphate + H2O = di-trans,octa-cis-undecaprenyl phosphate + phosphate + H(+). Catalyzes the dephosphorylation of undecaprenyl diphosphate (UPP). Confers resistance to bacitracin. The protein is Undecaprenyl-diphosphatase of Verminephrobacter eiseniae (strain EF01-2).